Consider the following 123-residue polypeptide: Proteasome assembly chaperone 4 (123 aa).

This sequence belongs to the PSMG4 family. As to quaternary structure, interacts with PSMG3. Associates with alpha subunits of the 20S proteasome.

Functionally, chaperone protein which promotes assembly of the 20S proteasome. The chain is Proteasome assembly chaperone 4 from Homo sapiens (Human).